The chain runs to 332 residues: HTH-type transcriptional regulator IdnR (332 aa).

An HTH lacI-type domain is found at 6-60; that stretch reads ISLQDIATLAGVTKMTVSRYIRSPKKVAKETGERIAKIMEEINYIPNRAPGMLLN. Positions 8-27 form a DNA-binding region, H-T-H motif; sequence LQDIATLAGVTKMTVSRYIR.

Its function is as follows. Idn operon regulator. May repress gntKU and gntT genes when growing on L-idonate. This Escherichia coli (strain K12) protein is HTH-type transcriptional regulator IdnR (idnR).